A 655-amino-acid chain; its full sequence is Probable alpha-galactosidase D (655 aa).

The N-terminal stretch at 1-16 is a signal peptide; that stretch reads MASVIALSLLLPAAFA. Residues Asn-87 and Asn-93 are each glycosylated (N-linked (GlcNAc...) asparagine). Cys-126 and Cys-153 form a disulfide bridge. Residue Asp-151 is the Nucleophile of the active site. Position 196 to 200 (196 to 200) interacts with substrate; sequence EWGID. Catalysis depends on Asp-218, which acts as the Proton donor. Residues Asn-432, Asn-482, Asn-502, Asn-540, and Asn-579 are each glycosylated (N-linked (GlcNAc...) asparagine).

Belongs to the glycosyl hydrolase 27 family.

The protein resides in the secreted. The enzyme catalyses Hydrolysis of terminal, non-reducing alpha-D-galactose residues in alpha-D-galactosides, including galactose oligosaccharides, galactomannans and galactolipids.. Its function is as follows. Hydrolyzes a variety of simple alpha-D-galactoside as well as more complex molecules such as oligosaccharides and polysaccharides. The polypeptide is Probable alpha-galactosidase D (aglD) (Aspergillus terreus (strain NIH 2624 / FGSC A1156)).